The primary structure comprises 466 residues: Asparagine--tRNA ligase (466 aa).

This sequence belongs to the class-II aminoacyl-tRNA synthetase family. As to quaternary structure, homodimer.

It is found in the cytoplasm. It carries out the reaction tRNA(Asn) + L-asparagine + ATP = L-asparaginyl-tRNA(Asn) + AMP + diphosphate + H(+). The sequence is that of Asparagine--tRNA ligase from Syntrophobacter fumaroxidans (strain DSM 10017 / MPOB).